Reading from the N-terminus, the 94-residue chain is Small ribosomal subunit protein bS6 (94 aa).

This sequence belongs to the bacterial ribosomal protein bS6 family.

Its function is as follows. Binds together with bS18 to 16S ribosomal RNA. This is Small ribosomal subunit protein bS6 from Clostridium botulinum (strain Hall / ATCC 3502 / NCTC 13319 / Type A).